Consider the following 529-residue polypeptide: Peptide chain release factor 3 (529 aa).

Residues 11 to 280 (AKRRTFAIIS…GLVAWAPAPM (270 aa)) enclose the tr-type G domain. GTP contacts are provided by residues 20–27 (SHPDAGKT), 88–92 (DTPGH), and 142–145 (NKLD).

The protein belongs to the TRAFAC class translation factor GTPase superfamily. Classic translation factor GTPase family. PrfC subfamily.

The protein resides in the cytoplasm. Its function is as follows. Increases the formation of ribosomal termination complexes and stimulates activities of RF-1 and RF-2. It binds guanine nucleotides and has strong preference for UGA stop codons. It may interact directly with the ribosome. The stimulation of RF-1 and RF-2 is significantly reduced by GTP and GDP, but not by GMP. The protein is Peptide chain release factor 3 of Salmonella agona (strain SL483).